The sequence spans 335 residues: Nucleoid-associated protein YejK (335 aa).

This sequence belongs to the YejK family.

It is found in the cytoplasm. The protein localises to the nucleoid. This chain is Nucleoid-associated protein YejK, found in Salmonella schwarzengrund (strain CVM19633).